Here is a 101-residue protein sequence, read N- to C-terminus: Aspartyl/glutamyl-tRNA(Asn/Gln) amidotransferase subunit C (101 aa).

Belongs to the GatC family. As to quaternary structure, heterotrimer of A, B and C subunits.

The enzyme catalyses L-glutamyl-tRNA(Gln) + L-glutamine + ATP + H2O = L-glutaminyl-tRNA(Gln) + L-glutamate + ADP + phosphate + H(+). It catalyses the reaction L-aspartyl-tRNA(Asn) + L-glutamine + ATP + H2O = L-asparaginyl-tRNA(Asn) + L-glutamate + ADP + phosphate + 2 H(+). Functionally, allows the formation of correctly charged Asn-tRNA(Asn) or Gln-tRNA(Gln) through the transamidation of misacylated Asp-tRNA(Asn) or Glu-tRNA(Gln) in organisms which lack either or both of asparaginyl-tRNA or glutaminyl-tRNA synthetases. The reaction takes place in the presence of glutamine and ATP through an activated phospho-Asp-tRNA(Asn) or phospho-Glu-tRNA(Gln). The protein is Aspartyl/glutamyl-tRNA(Asn/Gln) amidotransferase subunit C of Lactobacillus delbrueckii subsp. bulgaricus (strain ATCC 11842 / DSM 20081 / BCRC 10696 / JCM 1002 / NBRC 13953 / NCIMB 11778 / NCTC 12712 / WDCM 00102 / Lb 14).